Consider the following 705-residue polypeptide: Elongation factor G (705 aa).

The tr-type G domain occupies 8–289 (VNYRNIGISA…TVINYLPSPK (282 aa)). Residues 17–24 (AHIDAGKT), 88–92 (DTPGH), and 142–145 (NKMD) contribute to the GTP site.

It belongs to the TRAFAC class translation factor GTPase superfamily. Classic translation factor GTPase family. EF-G/EF-2 subfamily.

It is found in the cytoplasm. Catalyzes the GTP-dependent ribosomal translocation step during translation elongation. During this step, the ribosome changes from the pre-translocational (PRE) to the post-translocational (POST) state as the newly formed A-site-bound peptidyl-tRNA and P-site-bound deacylated tRNA move to the P and E sites, respectively. Catalyzes the coordinated movement of the two tRNA molecules, the mRNA and conformational changes in the ribosome. This is Elongation factor G from Wigglesworthia glossinidia brevipalpis.